A 1193-amino-acid polypeptide reads, in one-letter code: Cysteine protease ATG4 (1193 aa).

2 disordered regions span residues 23–284 and 358–474; these read AAIA…NKMS and WRPI…KKKS. Over residues 35-49 the composition is skewed to pro residues; the sequence is NLPPPPPPDRIPPPK. Positions 50–59 are enriched in basic residues; the sequence is GRSHQQKFKI. Composition is skewed to basic and acidic residues over residues 60-72, 117-127, and 140-153; these read LRKE…RQPI, ANREEKKEKTS, and FGRD…KPEE. The span at 170–185 shows a compositional bias: low complexity; it reads SSSTSTDSTTSRSITS. The segment covering 186–205 has biased composition (polar residues); sequence AFTRQNSIQSRRSPRTSFGQ. A compositionally biased stretch (low complexity) spans 227–238; the sequence is SSTTSHDPSSDP. Polar residues-rich tracts occupy residues 253–262, 270–284, and 389–447; these read QGASMSSLSR, GGTS…NKMS, and LSMN…STLS. The active-site Nucleophile is the C570. Active-site residues include D789 and H791. Disordered stretches follow at residues 807–869, 899–924, and 1000–1171; these read HSAK…SKYK, VPKS…TSTA, and QDEM…PARN. A compositionally biased stretch (low complexity) spans 835–846; that stretch reads RTPETPRSTTPS. Acidic residues-rich tracts occupy residues 1004–1029 and 1070–1084; these read PSWE…EFEE and HLDV…DDNE. Basic and acidic residues-rich tracts occupy residues 1097-1112 and 1152-1164; these read IARH…KREQ and PRYE…EQER.

It belongs to the peptidase C54 family.

It is found in the cytoplasm. Its subcellular location is the nucleus. It localises to the preautophagosomal structure. The enzyme catalyses [protein]-C-terminal L-amino acid-glycyl-phosphatidylethanolamide + H2O = [protein]-C-terminal L-amino acid-glycine + a 1,2-diacyl-sn-glycero-3-phosphoethanolamine. Cysteine protease that plays a key role in cytoplasm to vacuole transport (Cvt) and autophagy by mediating both proteolytic activation and delipidation of ATG8. Required for selective autophagic degradation of the nucleus (nucleophagy) as well as for mitophagy which contributes to regulate mitochondrial quantity and quality by eliminating the mitochondria to a basal level to fulfill cellular energy requirements and preventing excess ROS production. The protease activity is required for proteolytic activation of ATG8: cleaves the C-terminal amino acid of ATG8 to reveal a C-terminal glycine. ATG8 ubiquitin-like activity requires the exposure of the glycine at the C-terminus for its conjugation to phosphatidylethanolamine (PE) and its insertion to membranes, which is necessary for autophagy. The ATG8-PE conjugate mediates tethering between adjacent membranes and stimulates membrane hemifusion, leading to expansion of the autophagosomal membrane during autophagy. In addition to the protease activity, also catalyzes deconjugation of PE-conjugated forms of ATG8 during macroautophagy: ATG8 delipidation is required to release the protein from membranes, which facilitates multiple events during macroautophagy, and especially for efficient autophagosome biogenesis, the assembly of ATG9-containing tubulovesicular clusters into phagophores/autophagosomes, and for the disassembly of PAS-associated ATG components. ATG8 delipidation by ATG4 also recycles ATG8-PE generated on inappropriate membranes to maintain a reservoir of unlipidated ATG8 that is required for autophagosome formation at the PAS. The sequence is that of Cysteine protease ATG4 (ATG4) from Cryptococcus neoformans var. neoformans serotype D (strain JEC21 / ATCC MYA-565) (Filobasidiella neoformans).